The following is a 258-amino-acid chain: tRNA (guanine-N(1)-)-methyltransferase (258 aa).

Residues Gly-122 and 142-147 (LGDFVL) each bind S-adenosyl-L-methionine.

It belongs to the RNA methyltransferase TrmD family. As to quaternary structure, homodimer.

The protein localises to the cytoplasm. The catalysed reaction is guanosine(37) in tRNA + S-adenosyl-L-methionine = N(1)-methylguanosine(37) in tRNA + S-adenosyl-L-homocysteine + H(+). Functionally, specifically methylates guanosine-37 in various tRNAs. This is tRNA (guanine-N(1)-)-methyltransferase from Hahella chejuensis (strain KCTC 2396).